We begin with the raw amino-acid sequence, 492 residues long: METIALLAALFFIALTCFLTSGRRRNLPPGPYPLPIIGNMLQLGSNPHQSFAQLSKKYGPLMSIHLGSLYTVIVSSPEMAKEILHKHGQAFSGRTIAQAVHACDHDKISMGFLPVTSVWRDLRKICKEQMFSHQSLEASEGLRHQKLQQLLDYAQKCCETGRAVDIREASFITTLNLMSATMFSTQATEFESEATKEFKEIIEGVATIVGVPNFADYFPILKPFDLQGIKRQADGYFGRLLKKIEGYLNERVESRRLNPDAPRKNDFLETVVDIIEADEYKLTTDHLTHLMLDLFVGGSETNTTSLEWIMSELVINPDKMAKVKDEIKSVVGDKKIVDESEMPRLPYLQAAIKEVLRIHPPGPLLLPRRAEIDQEVNGYLIPKGTQILFNAWAIGRDPSIWKNPESFEPERFLDQTVDFKGQDFELIPFGSGRRICPGMPLANRILHMTTATLVHNFDWKLEEETANADHQDELFGLAVRRAVPLKIIPLRP.

Residues 1–21 (METIALLAALFFIALTCFLTS) form a helical membrane-spanning segment. Residues 22-492 (GRRRNLPPGP…VPLKIIPLRP (471 aa)) lie on the Cytoplasmic side of the membrane. Cysteine 436 is a heme binding site.

Belongs to the cytochrome P450 family. Heme is required as a cofactor.

It localises to the endoplasmic reticulum membrane. The catalysed reaction is abieta-8,11,13-triene + reduced [NADPH--hemoprotein reductase] + O2 = ferruginol + oxidized [NADPH--hemoprotein reductase] + H2O + H(+). It functions in the pathway secondary metabolite biosynthesis; terpenoid biosynthesis. In terms of biological role, cytochrome P450 enzyme (CYP) which catalyzes a unique two-electron oxidation cascade on abieta-8,11,13-triene to produce ferruginol, an intermediate in tanshinone biosynthesis. In Isodon rubescens (Rabdosia rubescens), this protein is Ferruginol synthase.